The sequence spans 149 residues: Probable microsomal glutathione S-transferase (149 aa).

Transmembrane regions (helical) follow at residues 7 to 27 and 123 to 143; these read SIFP…IGLW and LSHI…GSSL.

Belongs to the MAPEG family.

It is found in the membrane. The catalysed reaction is RX + glutathione = an S-substituted glutathione + a halide anion + H(+). In terms of biological role, may perform the conjugation of reduced glutathione to electrophiles. In Dictyostelium discoideum (Social amoeba), this protein is Probable microsomal glutathione S-transferase (mgst).